A 225-amino-acid chain; its full sequence is MSCESSMVLGYWDIRGLAHAIRLLLEFTDTSYEEKRYTCGEAPDYDRSQWLDVKFKLDLDFPNLPYLMDGKNKITQSNAILRYIARKHNMCGETEEEKIRVDIIENQVMDFRTQLIRLCYSSDHEKLKPQYLEELPGQLKQFSVFLGKFSWFAGEKLTFVDFLTYDILDQNRIFEPKCLDEFPNLKAFMCRFEALEKIAAYIQSDQFFKMPINNKMAQWGNKPVC.

One can recognise a GST N-terminal domain in the interval 5–92 (SSMVLGYWDI…YIARKHNMCG (88 aa)). Glutathione contacts are provided by residues 11–12 (YW), 50–54 (WLDVK), and 63–64 (NL). Residue Lys54 forms a Glycyl lysine isopeptide (Lys-Gly) (interchain with G-Cter in SUMO2) linkage. A Glycyl lysine isopeptide (Lys-Gly) (interchain with G-Cter in SUMO2) cross-link involves residue Lys73. 76-77 (QS) is a glutathione binding site. One can recognise a GST C-terminal domain in the interval 94–212 (TEEEKIRVDI…QSDQFFKMPI (119 aa)). Tyr120 lines the substrate pocket.

Belongs to the GST superfamily. Mu family. In terms of assembly, homodimer.

It is found in the cytoplasm. It carries out the reaction RX + glutathione = an S-substituted glutathione + a halide anion + H(+). Its function is as follows. Conjugation of reduced glutathione to a wide number of exogenous and endogenous hydrophobic electrophiles. May govern uptake and detoxification of both endogenous compounds and xenobiotics at the testis and brain blood barriers. This is Glutathione S-transferase Mu 3 (GSTM3) from Macaca fuscata fuscata (Japanese macaque).